Reading from the N-terminus, the 133-residue chain is Ribosome-binding factor A (133 aa).

This sequence belongs to the RbfA family. As to quaternary structure, monomer. Binds 30S ribosomal subunits, but not 50S ribosomal subunits or 70S ribosomes.

Its subcellular location is the cytoplasm. Its function is as follows. One of several proteins that assist in the late maturation steps of the functional core of the 30S ribosomal subunit. Associates with free 30S ribosomal subunits (but not with 30S subunits that are part of 70S ribosomes or polysomes). Required for efficient processing of 16S rRNA. May interact with the 5'-terminal helix region of 16S rRNA. The chain is Ribosome-binding factor A from Bordetella bronchiseptica (strain ATCC BAA-588 / NCTC 13252 / RB50) (Alcaligenes bronchisepticus).